The following is a 223-amino-acid chain: Protein Wnt-1 (223 aa).

Cystine bridges form between Cys7-Cys24, Cys72-Cys86, and Cys74-Cys81. Residue Ser78 is the site of O-palmitoleoyl serine; by PORCN attachment. The tract at residues 110-135 is disordered; sequence VTMRNDGSPSDRETESSFVPYNPSHK. Positions 125 to 135 are enriched in polar residues; the sequence is SSFVPYNPSHK. Disulfide bonds link Cys152–Cys183, Cys168–Cys178, Cys182–Cys222, Cys198–Cys213, Cys200–Cys210, and Cys205–Cys206. The N-linked (GlcNAc...) asparagine glycan is linked to Asn169.

The protein belongs to the Wnt family. Post-translationally, palmitoleoylation is required for efficient binding to frizzled receptors. Palmitoleoylation is necessary for proper trafficking to cell surface. Depalmitoleoylated by NOTUM, leading to inhibit Wnt signaling pathway.

Its subcellular location is the secreted. The protein localises to the extracellular space. It localises to the extracellular matrix. Ligand for members of the frizzled family of seven transmembrane receptors. Probable developmental protein. This is Protein Wnt-1 (WNT-1) from Strongylocentrotus purpuratus (Purple sea urchin).